A 430-amino-acid polypeptide reads, in one-letter code: Aspartate aminotransferase, mitochondrial (430 aa).

Residues 1–29 (MALLHSGRVLPGIAAAFHPGLAAAASARA) constitute a mitochondrion transit peptide. Threonine 48 carries the post-translational modification Phosphothreonine. Position 59 is an N6-acetyllysine (lysine 59). Glycine 65 is a substrate binding site. Position 73 is an N6-acetyllysine; alternate (lysine 73). The residue at position 73 (lysine 73) is an N6-succinyllysine; alternate. An N6-acetyllysine modification is found at lysine 82. At lysine 90 the chain carries N6-acetyllysine; alternate. The residue at position 90 (lysine 90) is an N6-succinyllysine; alternate. The residue at position 96 (tyrosine 96) is a 3'-nitrotyrosine; alternate. The residue at position 96 (tyrosine 96) is a Phosphotyrosine; alternate. Residues lysine 107 and lysine 122 each carry the N6-acetyllysine; alternate modification. N6-succinyllysine; alternate is present on residues lysine 107 and lysine 122. Serine 143 is subject to Phosphoserine. An N6-acetyllysine; alternate modification is found at lysine 159. Lysine 159 is subject to N6-succinyllysine; alternate. Residue tryptophan 162 participates in substrate binding. Residue lysine 185 is modified to N6-acetyllysine; alternate. Lysine 185 carries the post-translational modification N6-succinyllysine; alternate. Asparagine 215 serves as a coordination point for substrate. An N6-succinyllysine modification is found at lysine 227. Lysine 234 bears the N6-acetyllysine mark. 2 positions are modified to N6-acetyllysine; alternate: lysine 279 and lysine 296. Lysine 279 is modified (N6-(pyridoxal phosphate)lysine; alternate). An N6-succinyllysine; alternate modification is found at lysine 296. Lysine 302 carries the N6-acetyllysine modification. Lysine 309 is modified (N6-acetyllysine; alternate). An N6-succinyllysine; alternate modification is found at lysine 309. Position 313 is an asymmetric dimethylarginine (arginine 313). Residue threonine 333 is modified to Phosphothreonine. Lysine 338 is modified (N6-acetyllysine; alternate). The residue at position 338 (lysine 338) is an N6-succinyllysine; alternate. Position 345 is an N6-acetyllysine (lysine 345). Lysine 363 is modified (N6-acetyllysine; alternate). Lysine 363 bears the N6-succinyllysine; alternate mark. Lysine 364 and lysine 387 each carry N6-acetyllysine. N6-acetyllysine; alternate occurs at positions 396 and 404. An N6-succinyllysine; alternate mark is found at lysine 396 and lysine 404. Substrate is bound at residue arginine 407.

Belongs to the class-I pyridoxal-phosphate-dependent aminotransferase family. In terms of assembly, homodimer. Requires pyridoxal 5'-phosphate as cofactor.

The protein resides in the mitochondrion matrix. Its subcellular location is the cell membrane. It carries out the reaction L-aspartate + 2-oxoglutarate = oxaloacetate + L-glutamate. It catalyses the reaction L-kynurenine + 2-oxoglutarate = kynurenate + L-glutamate + H2O. Catalyzes the irreversible transamination of the L-tryptophan metabolite L-kynurenine to form kynurenic acid (KA). As a member of the malate-aspartate shuttle, it has a key role in the intracellular NAD(H) redox balance. Is important for metabolite exchange between mitochondria and cytosol, and for amino acid metabolism. Facilitates cellular uptake of long-chain free fatty acids. In Homo sapiens (Human), this protein is Aspartate aminotransferase, mitochondrial.